Consider the following 336-residue polypeptide: GTP 3',8-cyclase (336 aa).

The 226-residue stretch at 16–241 (AYRRTYYYLR…QSKGITDGPA (226 aa)) folds into the Radical SAM core domain. GTP is bound at residue arginine 25. Positions 32 and 36 each coordinate [4Fe-4S] cluster. Tyrosine 38 serves as a coordination point for S-adenosyl-L-methionine. Cysteine 39 provides a ligand contact to [4Fe-4S] cluster. Arginine 75 lines the GTP pocket. Position 79 (glycine 79) interacts with S-adenosyl-L-methionine. GTP is bound at residue threonine 106. Position 130 (serine 130) interacts with S-adenosyl-L-methionine. GTP is bound at residue lysine 167. Methionine 201 is a binding site for S-adenosyl-L-methionine. Residues cysteine 264 and cysteine 267 each contribute to the [4Fe-4S] cluster site. 269 to 271 (RLR) serves as a coordination point for GTP. Position 281 (cysteine 281) interacts with [4Fe-4S] cluster.

Belongs to the radical SAM superfamily. MoaA family. In terms of assembly, monomer and homodimer. It depends on [4Fe-4S] cluster as a cofactor.

It carries out the reaction GTP + AH2 + S-adenosyl-L-methionine = (8S)-3',8-cyclo-7,8-dihydroguanosine 5'-triphosphate + 5'-deoxyadenosine + L-methionine + A + H(+). Its pathway is cofactor biosynthesis; molybdopterin biosynthesis. Its function is as follows. Catalyzes the cyclization of GTP to (8S)-3',8-cyclo-7,8-dihydroguanosine 5'-triphosphate. This is GTP 3',8-cyclase from Actinobacillus succinogenes (strain ATCC 55618 / DSM 22257 / CCUG 43843 / 130Z).